Reading from the N-terminus, the 232-residue chain is MSLFNTVRKTIVPVHKEGYPFVAAFFVASLILGWIFKPLFWIGMIFTLWCAYFFRDPERVTPQDDDLVISPADGKVSAIQMVTPPAELDLGSEPMLRISVFMNVFNCHVNRAPMRGRIVSINYRSGSFVNAELDKASEDNERNGLVIETRHGQIGVVQIAGLVARRILCWANPNEPVDAGERFGLIRFGSRLDVFLPAGAAPRVSLGQVAIAGETVIAEFASTKGPIISRRS.

Residue serine 190 is the Schiff-base intermediate with substrate; via pyruvic acid of the active site. Serine 190 is subject to Pyruvic acid (Ser); by autocatalysis.

The protein belongs to the phosphatidylserine decarboxylase family. PSD-A subfamily. Heterodimer of a large membrane-associated beta subunit and a small pyruvoyl-containing alpha subunit. Requires pyruvate as cofactor. Is synthesized initially as an inactive proenzyme. Formation of the active enzyme involves a self-maturation process in which the active site pyruvoyl group is generated from an internal serine residue via an autocatalytic post-translational modification. Two non-identical subunits are generated from the proenzyme in this reaction, and the pyruvate is formed at the N-terminus of the alpha chain, which is derived from the carboxyl end of the proenzyme. The post-translation cleavage follows an unusual pathway, termed non-hydrolytic serinolysis, in which the side chain hydroxyl group of the serine supplies its oxygen atom to form the C-terminus of the beta chain, while the remainder of the serine residue undergoes an oxidative deamination to produce ammonia and the pyruvoyl prosthetic group on the alpha chain.

It is found in the cell membrane. The enzyme catalyses a 1,2-diacyl-sn-glycero-3-phospho-L-serine + H(+) = a 1,2-diacyl-sn-glycero-3-phosphoethanolamine + CO2. It participates in phospholipid metabolism; phosphatidylethanolamine biosynthesis; phosphatidylethanolamine from CDP-diacylglycerol: step 2/2. Its function is as follows. Catalyzes the formation of phosphatidylethanolamine (PtdEtn) from phosphatidylserine (PtdSer). The protein is Phosphatidylserine decarboxylase proenzyme of Rhizobium leguminosarum bv. trifolii (strain WSM2304).